Consider the following 503-residue polypeptide: NAD(P)H-quinone oxidoreductase chain 4, chloroplastic (503 aa).

Transmembrane regions (helical) follow at residues 4–24 (FPWL…IFFL), 37–57 (ICIC…HFQL), 87–107 (IGPT…AWPV), 134–154 (LLLF…LLSM), 167–187 (FILY…GMGL), 208–228 (ALEI…SPII), 242–262 (HYST…YGLV), 272–292 (AHSI…IYAA), 305–325 (IAYS…SITD), 330–350 (GAIL…FLAG), 386–406 (LALP…GIIT), 416–436 (ILIT…SLSM), and 462–482 (LFVS…PDFV).

This sequence belongs to the complex I subunit 4 family.

The protein resides in the plastid. It is found in the chloroplast thylakoid membrane. The catalysed reaction is a plastoquinone + NADH + (n+1) H(+)(in) = a plastoquinol + NAD(+) + n H(+)(out). The enzyme catalyses a plastoquinone + NADPH + (n+1) H(+)(in) = a plastoquinol + NADP(+) + n H(+)(out). The sequence is that of NAD(P)H-quinone oxidoreductase chain 4, chloroplastic from Drimys granadensis.